We begin with the raw amino-acid sequence, 674 residues long: L-type lectin-domain containing receptor kinase IV.3 (674 aa).

The signal sequence occupies residues 1–22 (MFFKLFTIFFFFIILLSKPLNS). N-linked (GlcNAc...) asparagine glycosylation is found at N21, N28, N40, N81, N136, and N188. At 23 to 296 (SSQSLNFTYN…TSLQRFYKNR (274 aa)) the chain is on the extracellular side. The legume-lectin like stretch occupies residues 26 to 263 (SLNFTYNSFH…SEHFVFGWSF (238 aa)). A helical transmembrane segment spans residues 297-317 (MPLFSLLLIPVLFVVSLIFLV). Residues 318–674 (RFIVRRRRKF…IAYSIVSGGR (357 aa)) are Cytoplasmic-facing. Residues 355–632 (FKDKDLLGSG…LQYLRGDATL (278 aa)) enclose the Protein kinase domain. Residues 361-369 (LGSGGFGRV) and K384 each bind ATP. D480 (proton acceptor) is an active-site residue.

It in the C-terminal section; belongs to the protein kinase superfamily. Ser/Thr protein kinase family. The protein in the N-terminal section; belongs to the leguminous lectin family.

It is found in the cell membrane. It carries out the reaction L-seryl-[protein] + ATP = O-phospho-L-seryl-[protein] + ADP + H(+). It catalyses the reaction L-threonyl-[protein] + ATP = O-phospho-L-threonyl-[protein] + ADP + H(+). The protein is L-type lectin-domain containing receptor kinase IV.3 (LECRK43) of Arabidopsis thaliana (Mouse-ear cress).